Consider the following 290-residue polypeptide: Fructose-1,6-bisphosphatase class 1 (290 aa).

Glu78, Asp96, Leu98, and Asp99 together coordinate Mg(2+). Residues 99–102, Tyr201, and Lys226 contribute to the substrate site; that span reads DGSS. Glu232 serves as a coordination point for Mg(2+).

It belongs to the FBPase class 1 family. As to quaternary structure, homotetramer. It depends on Mg(2+) as a cofactor.

The protein localises to the cytoplasm. It catalyses the reaction beta-D-fructose 1,6-bisphosphate + H2O = beta-D-fructose 6-phosphate + phosphate. The protein operates within carbohydrate biosynthesis; gluconeogenesis. This Helicobacter pylori (strain HPAG1) protein is Fructose-1,6-bisphosphatase class 1.